The primary structure comprises 1049 residues: RTX-III toxin determinant A from serotype 2 (1049 aa).

3 consecutive transmembrane segments (helical) span residues 154-170 (TIISGIQSVLGTVLAGI), 315-331 (ALIASSISLAISPLAFL), and 397-413 (LVGAPITLLVTGITGLI). Hemolysin-type calcium-binding repeat units follow at residues 743–760 (KGSKFRDIFHGADGDDLL), 761–778 (NGNDGDDILYGDKGNDEL), 779–796 (RGDNGNDQLYGGEGDDKL), 797–814 (LGGNGNNYLSGGDGNDEL), 825–842 (RGGKGDDKLYGSSGSDLL), and 843–860 (DGGEGNDYLEGGDGSDFY).

It belongs to the RTX prokaryotic toxin (TC 1.C.11) family. Post-translationally, palmitoylated by ApxIIIC. The toxin only becomes active when modified.

Its subcellular location is the secreted. It localises to the host cell membrane. In terms of biological role, does not have hemolytic activity but shows a strong cytotoxicity towards alveolar macrophages and neutrophils. This is RTX-III toxin determinant A from serotype 2 (apxIIIA) from Actinobacillus pleuropneumoniae (Haemophilus pleuropneumoniae).